The chain runs to 430 residues: Glutamate-1-semialdehyde 2,1-aminomutase (430 aa).

Lys268 carries the N6-(pyridoxal phosphate)lysine modification.

The protein belongs to the class-III pyridoxal-phosphate-dependent aminotransferase family. HemL subfamily. The cofactor is pyridoxal 5'-phosphate.

It is found in the cytoplasm. It carries out the reaction (S)-4-amino-5-oxopentanoate = 5-aminolevulinate. It participates in porphyrin-containing compound metabolism; protoporphyrin-IX biosynthesis; 5-aminolevulinate from L-glutamyl-tRNA(Glu): step 2/2. This Methanopyrus kandleri (strain AV19 / DSM 6324 / JCM 9639 / NBRC 100938) protein is Glutamate-1-semialdehyde 2,1-aminomutase.